Here is a 582-residue protein sequence, read N- to C-terminus: ATP-dependent lipid A-core flippase (582 aa).

Transmembrane regions (helical) follow at residues 16-36 (LWPT…ALIL), 64-84 (LMWM…TSYI), 153-173 (IIGL…ILIV), 253-273 (PIIQ…ASFP), and 275-295 (VMDS…IALM). Positions 28 to 310 (IVAGVALILN…LTNVNAQFQR (283 aa)) constitute an ABC transmembrane type-1 domain. Residues 342–578 (VEFRNVTFTY…RGVYAQLHKM (237 aa)) form the ABC transporter domain. ATP is bound at residue 376 to 383 (GRSGSGKS).

It belongs to the ABC transporter superfamily. Lipid exporter (TC 3.A.1.106) family. In terms of assembly, homodimer.

The protein resides in the cell inner membrane. It catalyses the reaction ATP + H2O + lipid A-core oligosaccharideSide 1 = ADP + phosphate + lipid A-core oligosaccharideSide 2.. Involved in lipopolysaccharide (LPS) biosynthesis. Translocates lipid A-core from the inner to the outer leaflet of the inner membrane. Transmembrane domains (TMD) form a pore in the inner membrane and the ATP-binding domain (NBD) is responsible for energy generation. This chain is ATP-dependent lipid A-core flippase, found in Escherichia coli O6:K15:H31 (strain 536 / UPEC).